We begin with the raw amino-acid sequence, 382 residues long: Anhydro-N-acetylmuramic acid kinase (382 aa).

Position 15–22 (15–22 (GTSLDGVD)) interacts with ATP.

This sequence belongs to the anhydro-N-acetylmuramic acid kinase family.

It catalyses the reaction 1,6-anhydro-N-acetyl-beta-muramate + ATP + H2O = N-acetyl-D-muramate 6-phosphate + ADP + H(+). Its pathway is amino-sugar metabolism; 1,6-anhydro-N-acetylmuramate degradation. The protein operates within cell wall biogenesis; peptidoglycan recycling. Its function is as follows. Catalyzes the specific phosphorylation of 1,6-anhydro-N-acetylmuramic acid (anhMurNAc) with the simultaneous cleavage of the 1,6-anhydro ring, generating MurNAc-6-P. Is required for the utilization of anhMurNAc either imported from the medium or derived from its own cell wall murein, and thus plays a role in cell wall recycling. The protein is Anhydro-N-acetylmuramic acid kinase of Haemophilus influenzae (strain ATCC 51907 / DSM 11121 / KW20 / Rd).